Here is a 471-residue protein sequence, read N- to C-terminus: Coronin-6 (471 aa).

5 WD repeats span residues 79–119, 129–169, 173–212, 216–259, and 264–304; these read GHTG…PVRN, GHSK…VLLS, IHPD…VVAE, PHEG…EPVA, and DTSN…PFVH. The disordered stretch occupies residues 410–433; sequence ILDVRPPASPRRSQSASEAPLSQH. Over residues 419–429 the composition is skewed to low complexity; sequence PRRSQSASEAP. Residues 426 to 468 are a coiled coil; sequence SEAPLSQHTLETLLEEIKALRDRVQAQEERITALENMLCELVD.

This Mus musculus (Mouse) protein is Coronin-6 (Coro6).